The following is a 458-amino-acid chain: uncharacterized protein (458 aa).

Disordered regions lie at residues 339-397 (GTGY…ARIL) and 434-458 (YNSE…EDDC). Composition is skewed to acidic residues over residues 344–390 (SDSD…EEEP) and 436–458 (SEDE…EDDC).

This is an uncharacterized protein from Invertebrate iridescent virus 3 (IIV-3).